Here is an 88-residue protein sequence, read N- to C-terminus: uncharacterized protein (88 aa).

2 helical membrane passes run 13 to 33 (FLAF…GWGP) and 62 to 82 (WFNI…ITGI).

It localises to the cell membrane. This is an uncharacterized protein from Bacillus subtilis (strain 168).